Consider the following 166-residue polypeptide: C-signal (166 aa).

In terms of processing, the mature C-signal (p17) is derived from the precursor sequence (p25) by proteolytic cleavage. The subtilisin-like protease PopC is directly responsible for cleavage of p25 to p17. The cleavage site is probably located between amino acid residues 60 and 68 in p25.

The protein localises to the secreted. The protein resides in the cell outer membrane. With respect to regulation, synthesized as a precursor protein (p25), which is cleaved after secretion to generate the mature active C-signal (p17). The p25 precursor purified from M.xanthus cells does not display C-signal activity. Cell-cell signaling protein required for fruiting body formation, a multicellular developmental program that is induced in response to starvation. Necessary for rippling, cellular aggregation, spore differentiation and for gene expression that is initiated after 6 hours of starvation. In starving cells, the C-signal directly induces aggregation and sporulation, which are induced at distinct threshold levels of C-signaling. Contact with C-signaling induces cells to glide with high speed and low stop and reversal frequencies toward aggregation centers. The C-signal acts as a morphogen and induces distinct events at distinct threshold levels. A regulated increase in the level of C-signaling during development ensures the correct temporal order of aggregation and sporulation. The sequence is that of C-signal from Myxococcus xanthus.